The sequence spans 496 residues: Germacrene A hydroxylase (496 aa).

Residues M1–E2 lie on the Cytoplasmic side of the membrane. Residues L3 to T23 form a helical; Signal-anchor for type II membrane protein membrane-spanning segment. The Lumenal segment spans residues G24 to A496. Residue C432 participates in heme binding. N493 carries N-linked (GlcNAc...) asparagine glycosylation.

It belongs to the cytochrome P450 family. The cofactor is heme.

The protein localises to the endoplasmic reticulum membrane. The enzyme catalyses (+)-(R)-germacrene A + 3 reduced [NADPH--hemoprotein reductase] + 3 O2 = germacra-1(10),4,11(13)-trien-12-oate + 3 oxidized [NADPH--hemoprotein reductase] + 4 H2O + 4 H(+). It participates in secondary metabolite biosynthesis; terpenoid biosynthesis. In terms of biological role, involved in the biosynthesis of germacrene-derived sesquiterpene lactones. Catalyzes three consecutive oxidations of germacrene A to produce germacrene A acid. Could also catalyze the three-step oxidation of non-natural substrate amorphadiene to artemisinic acid. The protein is Germacrene A hydroxylase of Barnadesia spinosa (Spiny barnadesia).